A 320-amino-acid polypeptide reads, in one-letter code: Acetyl-coenzyme A carboxylase carboxyl transferase subunit alpha (320 aa).

One can recognise a CoA carboxyltransferase C-terminal domain in the interval 42 to 295 (IEEKALAALT…GDAIAKSFAD (254 aa)).

Belongs to the AccA family. In terms of assembly, acetyl-CoA carboxylase is a heterohexamer composed of biotin carboxyl carrier protein (AccB), biotin carboxylase (AccC) and two subunits each of ACCase subunit alpha (AccA) and ACCase subunit beta (AccD).

It localises to the cytoplasm. The enzyme catalyses N(6)-carboxybiotinyl-L-lysyl-[protein] + acetyl-CoA = N(6)-biotinyl-L-lysyl-[protein] + malonyl-CoA. The protein operates within lipid metabolism; malonyl-CoA biosynthesis; malonyl-CoA from acetyl-CoA: step 1/1. Its function is as follows. Component of the acetyl coenzyme A carboxylase (ACC) complex. First, biotin carboxylase catalyzes the carboxylation of biotin on its carrier protein (BCCP) and then the CO(2) group is transferred by the carboxyltransferase to acetyl-CoA to form malonyl-CoA. The chain is Acetyl-coenzyme A carboxylase carboxyl transferase subunit alpha from Rhodopseudomonas palustris (strain BisA53).